The primary structure comprises 600 residues: DNA primase (600 aa).

The segment at 38 to 62 (CPFHDEKTPSFIVYPTRGHYHCYGC) adopts a CHC2-type zinc-finger fold. Residues 253–333 (KRVILVEGQA…GIAVIVCRLP (81 aa)) enclose the Toprim domain. Mg(2+)-binding residues include Glu-259, Asp-304, and Asp-306.

This sequence belongs to the DnaG primase family. As to quaternary structure, monomer. Interacts with DnaB. The cofactor is Zn(2+). Mg(2+) serves as cofactor.

It catalyses the reaction ssDNA + n NTP = ssDNA/pppN(pN)n-1 hybrid + (n-1) diphosphate.. RNA polymerase that catalyzes the synthesis of short RNA molecules used as primers for DNA polymerase during DNA replication. The chain is DNA primase from Chlamydia muridarum (strain MoPn / Nigg).